The following is a 101-amino-acid chain: uncharacterized protein (101 aa).

Transmembrane regions (helical) follow at residues 20–40 (KHFI…LLGL), 59–79 (GVIA…MYIA), and 81–101 (SEMW…ALFF).

It localises to the endoplasmic reticulum. It is found in the membrane. This is an uncharacterized protein from Saccharomyces cerevisiae (strain ATCC 204508 / S288c) (Baker's yeast).